We begin with the raw amino-acid sequence, 221 residues long: UPF0758 protein HI_0952 (221 aa).

Residues I99–L221 enclose the MPN domain. Residues H170, H172, and D183 each contribute to the Zn(2+) site. The JAMM motif motif lies at H170–D183.

This sequence belongs to the UPF0758 family.

The chain is UPF0758 protein HI_0952 from Haemophilus influenzae (strain ATCC 51907 / DSM 11121 / KW20 / Rd).